We begin with the raw amino-acid sequence, 779 residues long: Abnormal cell migration protein 10 (779 aa).

The segment covering 78–97 has biased composition (acidic residues); sequence NELEADTEEDIAETADDEES. 3 disordered regions span residues 78–105, 189–217, and 242–302; these read NELE…EKTE, SSSR…PQQP, and AASS…NAEE. The segment covering 189–200 has biased composition (polar residues); the sequence is SSSRENVKSIST. Over residues 242-254 the composition is skewed to low complexity; it reads AASSCSSPDGDSA. A compositionally biased stretch (polar residues) spans 256-293; the sequence is GDSSSTESSNNRCRNSAFSSNDSCRDSLNTPSPTQVSP. Residues 317-407 enclose the Ras-associating domain; that stretch reads EAKVTKIFVK…NKLYFMRRPD (91 aa). One can recognise a PH domain in the interval 456–566; sequence PPEMEGFLYL…WLVALRIAKN (111 aa). 2 stretches are compositionally biased toward polar residues: residues 645-660 and 688-698; these read SFSV…SRTS and RASTSSPTIPQ. The disordered stretch occupies residues 645 to 763; the sequence is SFSVNSCQQS…SPMAPAKNDL (119 aa). Over residues 708–729 the composition is skewed to pro residues; that stretch reads PAPPPVASVMRMPPPVTPPKPC.

Belongs to the MRL family. May interact (via Ras-associating and PH domains) with ced-10 (GTP-bound form).

The protein localises to the perikaryon. Its function is as follows. Required cell non-autonomously for proper development of the excretory canals and for the long-range anterior-posterior migrations of embryonic neurons CAN, ALM and HSN. Plays a role, probably downstream of ced-10/rac1, in orientating axonal growth of HSN and AVM neurons in response to guidance cues such as slt-1. May regulate growth cone polarization by promoting asymmetric F-actin assembly. May be involved in signal transduction during cell migration. The chain is Abnormal cell migration protein 10 from Caenorhabditis elegans.